The sequence spans 329 residues: Quinolinate synthase (329 aa).

2 residues coordinate iminosuccinate: His44 and Ser61. Residue Cys106 coordinates [4Fe-4S] cluster. Iminosuccinate-binding positions include 132-134 (YIN) and Ser149. Cys192 contacts [4Fe-4S] cluster. Residues 218 to 220 (HPE) and Thr235 contribute to the iminosuccinate site. Cys285 serves as a coordination point for [4Fe-4S] cluster.

Belongs to the quinolinate synthase family. Type 2 subfamily. The cofactor is [4Fe-4S] cluster.

Its subcellular location is the plastid. It is found in the cyanelle. The catalysed reaction is iminosuccinate + dihydroxyacetone phosphate = quinolinate + phosphate + 2 H2O + H(+). The protein operates within cofactor biosynthesis; NAD(+) biosynthesis; quinolinate from iminoaspartate: step 1/1. In terms of biological role, catalyzes the condensation of iminoaspartate with dihydroxyacetone phosphate to form quinolinate. The polypeptide is Quinolinate synthase (Cyanophora paradoxa).